Consider the following 378-residue polypeptide: MKVKVLSLLVPALLVAGAANAAEIYNKDGNKLDLFGKVDGLHYFSDDKGSDGDQTYMRIGFKGETQVNDQLTGYGQWEYQIQGNQTEGSNDSWTRVAFAGLKFADAGSFDYGRNYGVTYDVTSWTDVLPEFGGDTYGADNFMQQRGNGYATYRNTDFFGLVDGLDFALQYQGKNGSVSGENTNGRSLLNQNGDGYGGSLTYAIGEGFSVGGAITTSKRTADQNNTANARLYGNGDRATVYTGGLKYDANNIYLAAQYSQTYNATRFGTSNGSNPSTSYGFANKAQNFEVVAQYQFDFGLRPSVAYLQSKGKDISNGYGASYGDQDIVKYVDVGATYYFNKNMSTYVDYKINLLDKNDFTRDAGINTDDIVALGLVYQF.

Residues 1–21 (MKVKVLSLLVPALLVAGAANA) form the signal peptide.

Belongs to the Gram-negative porin family. As to quaternary structure, homotrimer.

The protein localises to the cell outer membrane. Its function is as follows. Forms pores that allow passive diffusion of small molecules across the outer membrane. This chain is Outer membrane porin C (ompC), found in Salmonella typhimurium (strain LT2 / SGSC1412 / ATCC 700720).